The sequence spans 342 residues: tRNA N6-adenosine threonylcarbamoyltransferase (342 aa).

The Fe cation site is built by His111 and His115. Residues 134–138 (LVSGG), Asp167, Gly180, and Asn275 contribute to the substrate site. Residue Asp303 coordinates Fe cation.

Belongs to the KAE1 / TsaD family. It depends on Fe(2+) as a cofactor.

It is found in the cytoplasm. It carries out the reaction L-threonylcarbamoyladenylate + adenosine(37) in tRNA = N(6)-L-threonylcarbamoyladenosine(37) in tRNA + AMP + H(+). Functionally, required for the formation of a threonylcarbamoyl group on adenosine at position 37 (t(6)A37) in tRNAs that read codons beginning with adenine. Is involved in the transfer of the threonylcarbamoyl moiety of threonylcarbamoyl-AMP (TC-AMP) to the N6 group of A37, together with TsaE and TsaB. TsaD likely plays a direct catalytic role in this reaction. This Paraburkholderia xenovorans (strain LB400) protein is tRNA N6-adenosine threonylcarbamoyltransferase.